We begin with the raw amino-acid sequence, 637 residues long: DNA gyrase subunit B (637 aa).

The region spanning 422–536 (CEVYIVEGDS…AGYVYLAMPP (115 aa)) is the Toprim domain. Positions 428, 501, and 503 each coordinate Mg(2+).

Belongs to the type II topoisomerase GyrB family. In terms of assembly, heterotetramer, composed of two GyrA and two GyrB chains. In the heterotetramer, GyrA contains the active site tyrosine that forms a transient covalent intermediate with DNA, while GyrB binds cofactors and catalyzes ATP hydrolysis. Mg(2+) is required as a cofactor. Mn(2+) serves as cofactor. It depends on Ca(2+) as a cofactor.

The protein localises to the cytoplasm. The enzyme catalyses ATP-dependent breakage, passage and rejoining of double-stranded DNA.. In terms of biological role, a type II topoisomerase that negatively supercoils closed circular double-stranded (ds) DNA in an ATP-dependent manner to modulate DNA topology and maintain chromosomes in an underwound state. Negative supercoiling favors strand separation, and DNA replication, transcription, recombination and repair, all of which involve strand separation. Also able to catalyze the interconversion of other topological isomers of dsDNA rings, including catenanes and knotted rings. Type II topoisomerases break and join 2 DNA strands simultaneously in an ATP-dependent manner. In Treponema pallidum (strain Nichols), this protein is DNA gyrase subunit B.